Consider the following 552-residue polypeptide: Arginine--tRNA ligase (552 aa).

The short motif at 130–140 (ANPTGPLSIGH) is the 'HIGH' region element.

It belongs to the class-I aminoacyl-tRNA synthetase family. Monomer.

The protein resides in the cytoplasm. It carries out the reaction tRNA(Arg) + L-arginine + ATP = L-arginyl-tRNA(Arg) + AMP + diphosphate. This Desulfotalea psychrophila (strain LSv54 / DSM 12343) protein is Arginine--tRNA ligase.